A 359-amino-acid polypeptide reads, in one-letter code: tRNA N6-adenosine threonylcarbamoyltransferase (359 aa).

Residues histidine 115 and histidine 119 each contribute to the Fe cation site. Residues leucine 137–glycine 141, aspartate 170, glycine 183, and asparagine 283 each bind substrate. Aspartate 311 provides a ligand contact to Fe cation. A disordered region spans residues alanine 328–alanine 359.

Belongs to the KAE1 / TsaD family. Fe(2+) serves as cofactor.

The protein resides in the cytoplasm. It carries out the reaction L-threonylcarbamoyladenylate + adenosine(37) in tRNA = N(6)-L-threonylcarbamoyladenosine(37) in tRNA + AMP + H(+). In terms of biological role, required for the formation of a threonylcarbamoyl group on adenosine at position 37 (t(6)A37) in tRNAs that read codons beginning with adenine. Is involved in the transfer of the threonylcarbamoyl moiety of threonylcarbamoyl-AMP (TC-AMP) to the N6 group of A37, together with TsaE and TsaB. TsaD likely plays a direct catalytic role in this reaction. The sequence is that of tRNA N6-adenosine threonylcarbamoyltransferase from Brucella suis (strain ATCC 23445 / NCTC 10510).